The primary structure comprises 323 residues: Formyltetrahydrofolate deformylase 1, mitochondrial (323 aa).

The N-terminal 25 residues, 1 to 25 (MIRRITERASGFAKNIPILKSSRFH), are a transit peptide targeting the mitochondrion. One can recognise an ACT domain in the interval 41–124 (VHVFHCQDAV…SVVRVPSIDP (84 aa)). D267 is a catalytic residue.

The protein belongs to the PurU family. As to expression, expressed in leaves, cotyledons, roots, seeds and flowers.

It localises to the mitochondrion. The catalysed reaction is (6R)-10-formyltetrahydrofolate + H2O = (6S)-5,6,7,8-tetrahydrofolate + formate + H(+). Its function is as follows. Deformylase involved in photorespiration. Prevents excessive accumulation of 5-formyl tetrahydrofolate (THF), a potent inhibitor of the Gly decarboxylase/Ser hydroxymethyltransferase complex. This chain is Formyltetrahydrofolate deformylase 1, mitochondrial (PURU1), found in Arabidopsis thaliana (Mouse-ear cress).